We begin with the raw amino-acid sequence, 137 residues long: Large ribosomal subunit protein uL16 (137 aa).

Over residues 1-17 (MLQPKRTKFRKTHKGRN) the composition is skewed to basic residues. Residues 1-24 (MLQPKRTKFRKTHKGRNRGLANSG) are disordered.

The protein belongs to the universal ribosomal protein uL16 family. In terms of assembly, part of the 50S ribosomal subunit.

Functionally, binds 23S rRNA and is also seen to make contacts with the A and possibly P site tRNAs. The chain is Large ribosomal subunit protein uL16 from Aeromonas hydrophila subsp. hydrophila (strain ATCC 7966 / DSM 30187 / BCRC 13018 / CCUG 14551 / JCM 1027 / KCTC 2358 / NCIMB 9240 / NCTC 8049).